Here is a 113-residue protein sequence, read N- to C-terminus: MSLSTEKKAAIVAEFGRDAKDTGSSEVQIALLTAQINHLQAHFAEHKKDHHGRRGLLRMVSRRRKLLDYLKRTDLALYQSTIARLGLRRLIFYYDSKKSSPRILRAFLWGCTR.

The protein belongs to the universal ribosomal protein uS15 family. Part of the 30S ribosomal subunit. Forms a bridge to the 50S subunit in the 70S ribosome, contacting the 23S rRNA.

Its function is as follows. One of the primary rRNA binding proteins, it binds directly to 16S rRNA where it helps nucleate assembly of the platform of the 30S subunit by binding and bridging several RNA helices of the 16S rRNA. In terms of biological role, forms an intersubunit bridge (bridge B4) with the 23S rRNA of the 50S subunit in the ribosome. This is Small ribosomal subunit protein uS15 from Haemophilus influenzae (strain PittEE).